Here is a 795-residue protein sequence, read N- to C-terminus: Lon protease (795 aa).

A Lon N-terminal domain is found at 11 to 203 (GRVIPVSDIV…KFIDYLLKQK (193 aa)). 356–363 (GPPGVGKT) contributes to the ATP binding site. One can recognise a Lon proteolytic domain in the interval 593-771 (DNVPGVVTGL…EDVLRETLGI (179 aa)). Active-site residues include serine 677 and lysine 720.

It belongs to the peptidase S16 family. In terms of assembly, homohexamer. Organized in a ring with a central cavity.

The protein resides in the cytoplasm. It catalyses the reaction Hydrolysis of proteins in presence of ATP.. Functionally, ATP-dependent serine protease that mediates the selective degradation of mutant and abnormal proteins as well as certain short-lived regulatory proteins. Required for cellular homeostasis and for survival from DNA damage and developmental changes induced by stress. Degrades polypeptides processively to yield small peptide fragments that are 5 to 10 amino acids long. Binds to DNA in a double-stranded, site-specific manner. The polypeptide is Lon protease (Clostridium beijerinckii (strain ATCC 51743 / NCIMB 8052) (Clostridium acetobutylicum)).